The chain runs to 764 residues: Protein translocase subunit SecA 2 (764 aa).

ATP-binding positions include Q83, 101 to 105 (GEGKT), and D490.

Belongs to the SecA family. In terms of assembly, monomer and homodimer. Part of the essential Sec protein translocation apparatus which comprises SecA, SecYEG and auxiliary proteins SecDF. Other proteins may also be involved.

The protein resides in the cell membrane. It is found in the cytoplasm. It catalyses the reaction ATP + H2O + cellular proteinSide 1 = ADP + phosphate + cellular proteinSide 2.. Its function is as follows. Part of the Sec protein translocase complex. Interacts with the SecYEG preprotein conducting channel. Has a central role in coupling the hydrolysis of ATP to the transfer of proteins into and across the cell membrane, serving as an ATP-driven molecular motor driving the stepwise translocation of polypeptide chains across the membrane. This chain is Protein translocase subunit SecA 2, found in Corynebacterium diphtheriae (strain ATCC 700971 / NCTC 13129 / Biotype gravis).